We begin with the raw amino-acid sequence, 387 residues long: 1-deoxy-D-xylulose 5-phosphate reductoisomerase (387 aa).

NADPH-binding residues include T11, G12, S13, I14, G37, R38, N39, and N125. A 1-deoxy-D-xylulose 5-phosphate-binding site is contributed by K126. Position 127 (E127) interacts with NADPH. D151 contributes to the Mn(2+) binding site. The 1-deoxy-D-xylulose 5-phosphate site is built by S152, E153, S177, and H200. E153 serves as a coordination point for Mn(2+). G206 provides a ligand contact to NADPH. Positions 213, 218, 219, and 222 each coordinate 1-deoxy-D-xylulose 5-phosphate. E222 contacts Mn(2+).

It belongs to the DXR family. The cofactor is Mg(2+). Mn(2+) serves as cofactor.

The catalysed reaction is 2-C-methyl-D-erythritol 4-phosphate + NADP(+) = 1-deoxy-D-xylulose 5-phosphate + NADPH + H(+). The protein operates within isoprenoid biosynthesis; isopentenyl diphosphate biosynthesis via DXP pathway; isopentenyl diphosphate from 1-deoxy-D-xylulose 5-phosphate: step 1/6. Functionally, catalyzes the NADPH-dependent rearrangement and reduction of 1-deoxy-D-xylulose-5-phosphate (DXP) to 2-C-methyl-D-erythritol 4-phosphate (MEP). The polypeptide is 1-deoxy-D-xylulose 5-phosphate reductoisomerase (Desulforamulus reducens (strain ATCC BAA-1160 / DSM 100696 / MI-1) (Desulfotomaculum reducens)).